Reading from the N-terminus, the 175-residue chain is uncharacterized protein (175 aa).

A mitochondrion-targeting transit peptide spans 1–11 (METWRKGSFRN). A disordered region spans residues 24 to 92 (RRLRRQSSVL…PRLYRESSSC (69 aa)). Over residues 41 to 63 (GDHEEYSNREVIRELQGRPDGRR) the composition is skewed to basic and acidic residues.

It is found in the mitochondrion. This is an uncharacterized protein from Homo sapiens (Human).